Here is a 790-residue protein sequence, read N- to C-terminus: Penicillin-binding protein 1A (790 aa).

The Cytoplasmic segment spans residues 1-6 (MYKSLF). Residues 7 to 27 (FCLKIFAVLILVGCGITAYII) traverse the membrane as a helical; Signal-anchor for type II membrane protein segment. Residues 28–790 (YHYSRDLPDY…SKEDQSQEIY (763 aa)) are Periplasmic-facing. A transglycosylase region spans residues 49-220 (TRIYSHDGKL…SELNPERNYA (172 aa)). Glu87 functions as the Proton donor; for transglycosylase activity in the catalytic mechanism. The transpeptidase stretch occupies residues 398–711 (DVIVVEPIKD…SNVVLPIFID (314 aa)). The Acyl-ester intermediate; for transpeptidase activity role is filled by Ser457.

It in the N-terminal section; belongs to the glycosyltransferase 51 family. This sequence in the C-terminal section; belongs to the transpeptidase family.

The protein localises to the cell inner membrane. It carries out the reaction [GlcNAc-(1-&gt;4)-Mur2Ac(oyl-L-Ala-gamma-D-Glu-L-Lys-D-Ala-D-Ala)](n)-di-trans,octa-cis-undecaprenyl diphosphate + beta-D-GlcNAc-(1-&gt;4)-Mur2Ac(oyl-L-Ala-gamma-D-Glu-L-Lys-D-Ala-D-Ala)-di-trans,octa-cis-undecaprenyl diphosphate = [GlcNAc-(1-&gt;4)-Mur2Ac(oyl-L-Ala-gamma-D-Glu-L-Lys-D-Ala-D-Ala)](n+1)-di-trans,octa-cis-undecaprenyl diphosphate + di-trans,octa-cis-undecaprenyl diphosphate + H(+). The catalysed reaction is Preferential cleavage: (Ac)2-L-Lys-D-Ala-|-D-Ala. Also transpeptidation of peptidyl-alanyl moieties that are N-acyl substituents of D-alanine.. It functions in the pathway cell wall biogenesis; peptidoglycan biosynthesis. In terms of biological role, cell wall formation. Synthesis of cross-linked peptidoglycan from the lipid intermediates. The enzyme has a penicillin-insensitive transglycosylase N-terminal domain (formation of linear glycan strands) and a penicillin-sensitive transpeptidase C-terminal domain (cross-linking of the peptide subunits). The sequence is that of Penicillin-binding protein 1A (mrcA) from Rickettsia felis (strain ATCC VR-1525 / URRWXCal2) (Rickettsia azadi).